Here is a 1554-residue protein sequence, read N- to C-terminus: Myosin-2 (1554 aa).

The Myosin N-terminal SH3-like domain maps to 4–57 (EVGTRCWYPDKQQGWIGGEITKHTNLSNKHQLELTLEDNQIVEIESETLDETKD). The Myosin motor domain occupies 70–774 (EATEDLTSLS…MLAYLEKLRS (705 aa)). 164–171 (GESGAGKT) contacts ATP. The actin-binding stretch occupies residues 443-523 (FIGVLDIYGF…LGILSLLDEE (81 aa)). IQ domains follow at residues 778-798 (HNSS…KKYL), 800-824 (IISS…DLEF), 825-847 (KTQA…KTIS), 848-872 (LLSA…LQRR), 873-895 (QRDA…SFNT), and 896-925 (TRRS…EAKS). Positions 926–1079 (VNHLKEVSYK…IARLQAAVRS (154 aa)) form a coiled coil. The segment at 1080-1554 (GVTSSTITST…VTVQESQRTE (475 aa)) is non alpha-helical, tail domain. Over residues 1082–1093 (TSSTITSTPTAS) the composition is skewed to low complexity. Positions 1082-1109 (TSSTITSTPTASRRFSAHSSVADGTSPR) are disordered. Residues 1098–1109 (AHSSVADGTSPR) show a composition bias toward polar residues. Residues 1205–1480 (AEVLSTIQKL…LNFVADRVKK (276 aa)) form the Dilute domain.

The protein belongs to the TRAFAC class myosin-kinesin ATPase superfamily. Myosin family. In terms of assembly, homodimer. Interacts with calmodulin (CMD1) and the myosin light chain MLC1 through its IQ repeats.

Functionally, myosin heavy chain that is required for the cell cycle-regulated transport of various organelles and proteins for their segregation. Functions by binding with its tail domain to receptor proteins on organelles and exerting force with its N-terminal motor domain against actin filaments, thereby transporting its cargo along polarized actin cables. This chain is Myosin-2 (MYO2), found in Lachancea kluyveri (strain ATCC 58438 / CBS 3082 / BCRC 21498 / NBRC 1685 / JCM 7257 / NCYC 543 / NRRL Y-12651) (Yeast).